A 1044-amino-acid polypeptide reads, in one-letter code: Integrin alpha-V (1044 aa).

The signal sequence occupies residues 1 to 30; it reads MAAPGRLLLRPRPGGLLLLLPGLLLPLADA. The Extracellular portion of the chain corresponds to 31–988; sequence FNLDVESPAE…WGIQPAPMPV (958 aa). 7 FG-GAP repeats span residues 32–98, 109–170, 173–225, 237–291, 292–357, 358–415, and 419–482; these read NLDV…RRCQ, DYAK…VEYA, RSKN…ISKY, QLAT…GKNM, SSLH…GDFQ, TTKL…GLNS, and QILE…VYPS. N-linked (GlcNAc...) asparagine glycosylation occurs at Asn-74. 3 cysteine pairs are disulfide-bonded: Cys-89/Cys-97, Cys-138/Cys-158, and Cys-172/Cys-185. Ca(2+)-binding residues include Asp-260, Asn-262, Asp-264, Ile-266, and Asp-268. Residues Asn-290 and Asn-296 are each glycosylated (N-linked (GlcNAc...) asparagine). Positions 314, 316, 318, 320, 322, 379, 381, 383, 385, 387, 443, 445, 447, 449, and 451 each coordinate Ca(2+). 2 cysteine pairs are disulfide-bonded: Cys-491/Cys-502 and Cys-508/Cys-565. Asn-615 carries N-linked (GlcNAc...) asparagine glycosylation. 2 disulfides stabilise this stretch: Cys-626–Cys-632 and Cys-698–Cys-711. N-linked (GlcNAc...) asparagine glycans are attached at residues Asn-704, Asn-835, Asn-851, and Asn-869. Disulfide bonds link Cys-852-Cys-910 and Cys-900-Cys-905. 3 N-linked (GlcNAc...) asparagine glycosylation sites follow: Asn-941, Asn-969, and Asn-976. A helical transmembrane segment spans residues 989 to 1012; the sequence is PVWVIILAVLAGLLLLAVLVFVMY. The Cytoplasmic segment spans residues 1013–1044; sequence RMGFFKRVRPPQEEQEREQLQPHENGEGNSET. Positions 1015-1019 match the GFFKR motif motif; sequence GFFKR. The span at 1023-1038 shows a compositional bias: basic and acidic residues; sequence PQEEQEREQLQPHENG. Positions 1023–1044 are disordered; it reads PQEEQEREQLQPHENGEGNSET.

Belongs to the integrin alpha chain family. As to quaternary structure, heterodimer of an alpha and a beta subunit. The alpha subunit is composed of a heavy and a light chain linked by a disulfide bond. Alpha-V (ITGAV) associates with either beta-1 (ITGB1), beta-3 (ITGB3), beta-5 (ITGB5), beta-6 (ITGB6) or beta-8 (ITGB8). Interacts with RAB25. Interacts with CIB1. Integrins ITGAV:ITGB3 and ITGAV:ITGB5 interact with FBLN5 (via N-terminus). ITGAV:ITGB3 and ITGAV:ITGB5 interact with CCN3. ITGAV:ITGB3 interacts with ADGRA2. ITGAV:ITGB3 interacts with FGF2; it is likely that FGF2 can simultaneously bind ITGAV:ITGB3 and FGF receptors. ITGAV:ITGB3 interacts with SELP (via C-type lectin domain); the interaction mediates cell-cell interaction and adhesion. ITGAV:ITGB3 is found in a ternary complex with CX3CR1 and CX3CL1. ITGAV:ITGB3 is found in a ternary complex with NRG1 and ERBB3. ITGAV:ITGB3 is found in a ternary complex with FGF1 and FGFR1. ITGAV:ITGB3 is found in a ternary complex with IGF1 and IGF1R. ITGAV:ITGB3 interacts with IGF2. ITGAV:ITGB3 and ITGAV:ITGB6 interact with FBN1. ITGAV:ITGB3 interacts with CD9, CD81 and CD151 (via second extracellular domain). ITGAV:ITGB6 interacts with TGFB1. ITGAV:ITGB3 interacts with PTN. Forms a complex with PTPRZ1 and PTN that stimulates endothelial cell migration through ITGB3 'Tyr-773' phosphorylation. Interacts with TM4SF19.

Its subcellular location is the cell membrane. The protein resides in the cell junction. It localises to the focal adhesion. The alpha-V (ITGAV) integrins are receptors for vitronectin, cytotactin, fibronectin, fibrinogen, laminin, matrix metalloproteinase-2, osteopontin, osteomodulin, prothrombin, thrombospondin, TGFB1 and vWF. They recognize the sequence R-G-D in a wide array of ligands. Alpha-V integrins may play a role in embryo implantation, angiogenesis and wound healing. ITGAV:ITGB3 binds to fractalkine (CX3CL1) and may act as its coreceptor in CX3CR1-dependent fractalkine signaling. ITGAV:ITGB3 binds to NRG1 (via EGF domain) and this binding is essential for NRG1-ERBB signaling. ITGAV:ITGB3 binds to FGF1 and this binding is essential for FGF1 signaling. ITGAV:ITGB3 binds to FGF2 and this binding is essential for FGF2 signaling. ITGAV:ITGB3 binds to IGF1 and this binding is essential for IGF1 signaling. ITGAV:ITGB3 binds to IGF2 and this binding is essential for IGF2 signaling. ITGAV:ITGB3 binds to IL1B and this binding is essential for IL1B signaling. ITGAV:ITGB3 binds to PLA2G2A via a site (site 2) which is distinct from the classical ligand-binding site (site 1) and this induces integrin conformational changes and enhanced ligand binding to site 1. ITGAV:ITGB3 and ITGAV:ITGB6 act as a receptor for fibrillin-1 (FBN1) and mediate R-G-D-dependent cell adhesion to FBN1. Integrin alpha-V/beta-6 or alpha-V/beta-8 (ITGAV:ITGB6 or ITGAV:ITGB8) mediates R-G-D-dependent release of transforming growth factor beta-1 (TGF-beta-1) from regulatory Latency-associated peptide (LAP), thereby playing a key role in TGF-beta-1 activation. ITGAV:ITGB3 acts as a receptor for CD40LG. ITGAV:ITGB3 binds to the Lilrb4a/Gp49b receptor and enhances the Lilrb4a-mediated inhibition of mast cell activation. ITGAV:ITGB3 also suppresses marginal zone B cell antibody production through its interaction with Lilrb4a. ITGAV:ITGB3 acts as a receptor for IBSP and promotes cell adhesion and migration to IBSP. The chain is Integrin alpha-V (Itgav) from Mus musculus (Mouse).